Consider the following 171-residue polypeptide: Small ribosomal subunit protein uS5 (171 aa).

The 64-residue stretch at 12–75 (LKEKLISVNR…EKARRNMIQV (64 aa)) folds into the S5 DRBM domain.

This sequence belongs to the universal ribosomal protein uS5 family. Part of the 30S ribosomal subunit. Contacts proteins S4 and S8.

With S4 and S12 plays an important role in translational accuracy. Its function is as follows. Located at the back of the 30S subunit body where it stabilizes the conformation of the head with respect to the body. This is Small ribosomal subunit protein uS5 from Buchnera aphidicola subsp. Baizongia pistaciae (strain Bp).